The primary structure comprises 481 residues: ATP synthase subunit beta (481 aa).

167–174 (GGAGVGKT) lines the ATP pocket.

The protein belongs to the ATPase alpha/beta chains family. As to quaternary structure, F-type ATPases have 2 components, CF(1) - the catalytic core - and CF(0) - the membrane proton channel. CF(1) has five subunits: alpha(3), beta(3), gamma(1), delta(1), epsilon(1). CF(0) has three main subunits: a(1), b(2) and c(9-12). The alpha and beta chains form an alternating ring which encloses part of the gamma chain. CF(1) is attached to CF(0) by a central stalk formed by the gamma and epsilon chains, while a peripheral stalk is formed by the delta and b chains.

The protein localises to the cell membrane. It carries out the reaction ATP + H2O + 4 H(+)(in) = ADP + phosphate + 5 H(+)(out). Its function is as follows. Produces ATP from ADP in the presence of a proton gradient across the membrane. The catalytic sites are hosted primarily by the beta subunits. The chain is ATP synthase subunit beta from Corynebacterium diphtheriae (strain ATCC 700971 / NCTC 13129 / Biotype gravis).